The primary structure comprises 334 residues: Aspartate carbamoyltransferase catalytic subunit (334 aa).

Residues R71 and T72 each coordinate carbamoyl phosphate. Residue K99 coordinates L-aspartate. Positions 121, 151, and 154 each coordinate carbamoyl phosphate. Residues R184 and R239 each contribute to the L-aspartate site. Carbamoyl phosphate contacts are provided by G280 and P281.

Belongs to the aspartate/ornithine carbamoyltransferase superfamily. ATCase family. Heterododecamer (2C3:3R2) of six catalytic PyrB chains organized as two trimers (C3), and six regulatory PyrI chains organized as three dimers (R2).

The enzyme catalyses carbamoyl phosphate + L-aspartate = N-carbamoyl-L-aspartate + phosphate + H(+). It participates in pyrimidine metabolism; UMP biosynthesis via de novo pathway; (S)-dihydroorotate from bicarbonate: step 2/3. Catalyzes the condensation of carbamoyl phosphate and aspartate to form carbamoyl aspartate and inorganic phosphate, the committed step in the de novo pyrimidine nucleotide biosynthesis pathway. The protein is Aspartate carbamoyltransferase catalytic subunit of Pseudomonas fluorescens (strain ATCC BAA-477 / NRRL B-23932 / Pf-5).